The chain runs to 293 residues: Elongation factor Ts (293 aa).

The segment at 80-83 (TDFV) is involved in Mg(2+) ion dislocation from EF-Tu.

This sequence belongs to the EF-Ts family.

Its subcellular location is the cytoplasm. In terms of biological role, associates with the EF-Tu.GDP complex and induces the exchange of GDP to GTP. It remains bound to the aminoacyl-tRNA.EF-Tu.GTP complex up to the GTP hydrolysis stage on the ribosome. The sequence is that of Elongation factor Ts from Janthinobacterium sp. (strain Marseille) (Minibacterium massiliensis).